A 20-amino-acid chain; its full sequence is VRDAYIAEDYDCVYHCARDA.

The region spanning 2–20 is the LCN-type CS-alpha/beta domain; sequence RDAYIAEDYDCVYHCARDA.

It belongs to the long (4 C-C) scorpion toxin superfamily. Sodium channel inhibitor family. Alpha subfamily. Expressed by the venom gland.

It localises to the secreted. Functionally, binds to sodium channels (Nav) and inhibits the inactivation of the activated channels, thereby blocking neuronal transmission. The polypeptide is Neurotoxin BmK 18(2) (Olivierus martensii (Manchurian scorpion)).